A 503-amino-acid polypeptide reads, in one-letter code: Intracellular exo-alpha-(1-&gt;5)-L-arabinofuranosidase (503 aa).

Residues glutamate 27, asparagine 72, and asparagine 172 each contribute to the alpha-L-arabinofuranose site. Glutamate 173 functions as the Proton donor/acceptor in the catalytic mechanism. Tyrosine 244, glutamate 292, and glutamine 352 together coordinate alpha-L-arabinofuranose. Glutamate 292 serves as the catalytic Nucleophile.

This sequence belongs to the glycosyl hydrolase 51 family. As to quaternary structure, homohexamer; trimer of dimers.

It is found in the cytoplasm. It carries out the reaction Hydrolysis of terminal non-reducing alpha-L-arabinofuranoside residues in alpha-L-arabinosides.. It functions in the pathway glycan metabolism; L-arabinan degradation. In terms of biological role, involved in the degradation of arabinan and is a key enzyme in the complete degradation of the plant cell wall. Catalyzes the cleavage of terminal alpha-(1-&gt;5)-arabinofuranosyl bonds in small oligosaccharides as alpha-(1-&gt;5)-linked arabinobiose/arabinotriose, but does not display significant activity against linear non-substituted arabinan. It is also highly efficient in the cleavage of alpha-(1-&gt;3)-linked arabinoside of xylobiose and of the alpha-(1-&gt;3)-linked arabinoside decorations of polymeric wheat arabinoxylan. It exhibits very low activity against sugar beet arabinan. In Acetivibrio thermocellus (strain ATCC 27405 / DSM 1237 / JCM 9322 / NBRC 103400 / NCIMB 10682 / NRRL B-4536 / VPI 7372) (Clostridium thermocellum), this protein is Intracellular exo-alpha-(1-&gt;5)-L-arabinofuranosidase.